Here is a 515-residue protein sequence, read N- to C-terminus: GMP synthase [glutamine-hydrolyzing] (515 aa).

Residues 10-200 (TIIVLDFGSQ…VFGVCGCSEG (191 aa)) enclose the Glutamine amidotransferase type-1 domain. The active-site Nucleophile is the Cys-87. Active-site residues include His-174 and Glu-176. The GMPS ATP-PPase domain maps to 201–390 (WNMENFIEVE…LGIPDEIVWR (190 aa)). 228–234 (SGGVDSS) is an ATP binding site.

Homodimer.

The enzyme catalyses XMP + L-glutamine + ATP + H2O = GMP + L-glutamate + AMP + diphosphate + 2 H(+). Its pathway is purine metabolism; GMP biosynthesis; GMP from XMP (L-Gln route): step 1/1. In terms of biological role, catalyzes the synthesis of GMP from XMP. This is GMP synthase [glutamine-hydrolyzing] from Bacillus thuringiensis subsp. konkukian (strain 97-27).